Here is a 193-residue protein sequence, read N- to C-terminus: Probable gluconokinase (193 aa).

ATP is bound at residue 21-28 (GPAGSGKT).

It belongs to the gluconokinase GntK/GntV family.

It carries out the reaction D-gluconate + ATP = 6-phospho-D-gluconate + ADP + H(+). It functions in the pathway carbohydrate acid metabolism; D-gluconate degradation. The polypeptide is Probable gluconokinase (Schizosaccharomyces pombe (strain 972 / ATCC 24843) (Fission yeast)).